The following is a 279-amino-acid chain: Energy-coupling factor transporter ATP-binding protein EcfA1 (279 aa).

Residues 6 to 240 (ISVDHLTYQY…GTQLVEMGLD (235 aa)) form the ABC transporter domain. An ATP-binding site is contributed by 40-47 (GHNGSGKS).

It belongs to the ABC transporter superfamily. Energy-coupling factor EcfA family. Forms a stable energy-coupling factor (ECF) transporter complex composed of 2 membrane-embedded substrate-binding proteins (S component), 2 ATP-binding proteins (A component) and 2 transmembrane proteins (T component).

It localises to the cell membrane. ATP-binding (A) component of a common energy-coupling factor (ECF) ABC-transporter complex. Unlike classic ABC transporters this ECF transporter provides the energy necessary to transport a number of different substrates. The polypeptide is Energy-coupling factor transporter ATP-binding protein EcfA1 (Levilactobacillus brevis (strain ATCC 367 / BCRC 12310 / CIP 105137 / JCM 1170 / LMG 11437 / NCIMB 947 / NCTC 947) (Lactobacillus brevis)).